Here is a 142-residue protein sequence, read N- to C-terminus: Large ribosomal subunit protein uL13 (142 aa).

Belongs to the universal ribosomal protein uL13 family. In terms of assembly, part of the 50S ribosomal subunit.

In terms of biological role, this protein is one of the early assembly proteins of the 50S ribosomal subunit, although it is not seen to bind rRNA by itself. It is important during the early stages of 50S assembly. The protein is Large ribosomal subunit protein uL13 of Shewanella baltica (strain OS223).